A 473-amino-acid chain; its full sequence is Ribulose bisphosphate carboxylase large chain 2 (473 aa).

Residues Asn-116 and Thr-166 each coordinate substrate. The active-site Proton acceptor is Lys-168. Lys-170 is a substrate binding site. Lys-194, Asp-196, and Glu-197 together coordinate Mg(2+). Position 194 is an N6-carboxylysine (Lys-194). His-287 (proton acceptor) is an active-site residue. Residues Arg-288, His-320, and Ser-372 each contribute to the substrate site.

The protein belongs to the RuBisCO large chain family. Type I subfamily. In terms of assembly, heterohexadecamer of 8 large chains and 8 small chains. Mg(2+) serves as cofactor.

It catalyses the reaction 2 (2R)-3-phosphoglycerate + 2 H(+) = D-ribulose 1,5-bisphosphate + CO2 + H2O. The enzyme catalyses D-ribulose 1,5-bisphosphate + O2 = 2-phosphoglycolate + (2R)-3-phosphoglycerate + 2 H(+). Its function is as follows. RuBisCO catalyzes two reactions: the carboxylation of D-ribulose 1,5-bisphosphate, the primary event in carbon dioxide fixation, as well as the oxidative fragmentation of the pentose substrate. Both reactions occur simultaneously and in competition at the same active site. The sequence is that of Ribulose bisphosphate carboxylase large chain 2 from Cereibacter sphaeroides (strain ATCC 17025 / ATH 2.4.3) (Rhodobacter sphaeroides).